Here is a 209-residue protein sequence, read N- to C-terminus: Redox-sensing transcriptional repressor Rex (209 aa).

The segment at residues 16 to 55 (LYYRFIQNLSLSGKQRVSSAELSEAVKVDSATIRRDFSYF) is a DNA-binding region (H-T-H motif). 90 to 95 (GVGNLG) contacts NAD(+).

This sequence belongs to the transcriptional regulatory Rex family. In terms of assembly, homodimer.

Its subcellular location is the cytoplasm. Modulates transcription in response to changes in cellular NADH/NAD(+) redox state. This chain is Redox-sensing transcriptional repressor Rex, found in Bacillus thuringiensis (strain Al Hakam).